Here is a 303-residue protein sequence, read N- to C-terminus: Protoheme IX farnesyltransferase (303 aa).

Helical transmembrane passes span 26–46, 48–68, 98–118, 120–140, 148–168, 174–194, 221–241, 244–264, and 278–298; these read VVAL…PGMV, IDIL…AAAV, AILF…VWVN, LTAW…TFWL, IVIG…AVTG, ALLL…ALAV, ILLY…THML, LYLL…VAMM, and YSIV…YLLP.

The protein belongs to the UbiA prenyltransferase family. Protoheme IX farnesyltransferase subfamily.

The protein resides in the cell inner membrane. The catalysed reaction is heme b + (2E,6E)-farnesyl diphosphate + H2O = Fe(II)-heme o + diphosphate. It participates in porphyrin-containing compound metabolism; heme O biosynthesis; heme O from protoheme: step 1/1. Its function is as follows. Converts heme B (protoheme IX) to heme O by substitution of the vinyl group on carbon 2 of heme B porphyrin ring with a hydroxyethyl farnesyl side group. The sequence is that of Protoheme IX farnesyltransferase from Saccharophagus degradans (strain 2-40 / ATCC 43961 / DSM 17024).